A 272-amino-acid chain; its full sequence is Formamidopyrimidine-DNA glycosylase (272 aa).

Catalysis depends on proline 2, which acts as the Schiff-base intermediate with DNA. Glutamate 3 serves as the catalytic Proton donor. Lysine 58 functions as the Proton donor; for beta-elimination activity in the catalytic mechanism. DNA contacts are provided by histidine 92, arginine 111, and arginine 153. An FPG-type zinc finger spans residues 238 to 272; the sequence is AVYGRQGQSCPRCGGLVERCRLGQRSTFFCPACQR. The active-site Proton donor; for delta-elimination activity is the arginine 262.

Belongs to the FPG family. As to quaternary structure, monomer. Zn(2+) is required as a cofactor.

The enzyme catalyses Hydrolysis of DNA containing ring-opened 7-methylguanine residues, releasing 2,6-diamino-4-hydroxy-5-(N-methyl)formamidopyrimidine.. It carries out the reaction 2'-deoxyribonucleotide-(2'-deoxyribose 5'-phosphate)-2'-deoxyribonucleotide-DNA = a 3'-end 2'-deoxyribonucleotide-(2,3-dehydro-2,3-deoxyribose 5'-phosphate)-DNA + a 5'-end 5'-phospho-2'-deoxyribonucleoside-DNA + H(+). Involved in base excision repair of DNA damaged by oxidation or by mutagenic agents. Acts as a DNA glycosylase that recognizes and removes damaged bases. Has a preference for oxidized purines, such as 7,8-dihydro-8-oxoguanine (8-oxoG). Has AP (apurinic/apyrimidinic) lyase activity and introduces nicks in the DNA strand. Cleaves the DNA backbone by beta-delta elimination to generate a single-strand break at the site of the removed base with both 3'- and 5'-phosphates. This chain is Formamidopyrimidine-DNA glycosylase, found in Laribacter hongkongensis (strain HLHK9).